Here is a 313-residue protein sequence, read N- to C-terminus: PDZ domain-containing protein GIPC2 (313 aa).

Over residues 14 to 27 the composition is skewed to basic and acidic residues; it reads KETSRLVEGEHTDA. The segment at 14–34 is disordered; the sequence is KETSRLVEGEHTDAAVRSLPS. Positions 117–197 constitute a PDZ domain; sequence EVNVYKSEDS…EELFTLTLIE (81 aa).

The protein belongs to the GIPC family. Probably interacts with SEMA5A.

Its subcellular location is the cytoplasm. The polypeptide is PDZ domain-containing protein GIPC2 (GIPC2) (Bos taurus (Bovine)).